Here is a 302-residue protein sequence, read N- to C-terminus: Sulfate adenylyltransferase subunit 2 (302 aa).

The protein belongs to the PAPS reductase family. CysD subfamily. Heterodimer composed of CysD, the smaller subunit, and CysN.

It catalyses the reaction sulfate + ATP + H(+) = adenosine 5'-phosphosulfate + diphosphate. The protein operates within sulfur metabolism; hydrogen sulfide biosynthesis; sulfite from sulfate: step 1/3. Its function is as follows. With CysN forms the ATP sulfurylase (ATPS) that catalyzes the adenylation of sulfate producing adenosine 5'-phosphosulfate (APS) and diphosphate, the first enzymatic step in sulfur assimilation pathway. APS synthesis involves the formation of a high-energy phosphoric-sulfuric acid anhydride bond driven by GTP hydrolysis by CysN coupled to ATP hydrolysis by CysD. The chain is Sulfate adenylyltransferase subunit 2 from Pectobacterium carotovorum subsp. carotovorum (strain PC1).